Here is a 137-residue protein sequence, read N- to C-terminus: Nuclear transition protein 2 (137 aa).

The span at 1-21 (MDTKTQSLPNAHTQPHSNSGP) shows a compositional bias: polar residues. The tract at residues 1–137 (MDTKTQSLPN…KRRSSGRKYN (137 aa)) is disordered. Residues His-12, His-16, His-24, Cys-29, Cys-31, Cys-35, and Cys-38 each contribute to the Zn(2+) site. A compositionally biased stretch (low complexity) spans 22–74 (QSHACNQCSCSHHCQNCSQSCDRSQSCSRSRSSSQSPTGHRSLPGHQSQSLSP). Positions 78-91 (PRHRKRAMHSHRCP) are enriched in basic residues. The Nuclear localization signal signature appears at 110-118 (GKANKRKGI). Basic residues predominate over residues 126–137 (KTKRRSSGRKYN). Ser-132 carries the post-translational modification Phosphoserine.

This sequence belongs to the nuclear transition protein 2 family. Testis. Expression is restricted to haploid germ cells.

The protein localises to the nucleus. Its subcellular location is the nucleolus. The protein resides in the chromosome. Its function is as follows. Plays a key role in the replacement of histones to protamine in the elongating spermatids of mammals. In condensing spermatids, loaded onto the nucleosomes, where it promotes the recruitment and processing of protamines, which are responsible for histone eviction. This is Nuclear transition protein 2 (TNP2) from Sus scrofa (Pig).